The following is a 462-amino-acid chain: Toxin CfTX-2 (462 aa).

The N-terminal stretch at methionine 1–serine 17 is a signal peptide.

This sequence belongs to the jellyfish toxin family. Type I subfamily. Oligomer. Contains disulfide bonds. Nematocytes.

The protein localises to the secreted. It localises to the nematocyst. The protein resides in the target cell membrane. Functionally, may cause profound effects on the cardiovascular system of anesthetized rats (at 25 ug/kg), since the fraction containing this toxin and CfTX-1 produces an initial increase in mean arterial pressure, followed by cardiovascular collapse in all animals within 1 minute of injection. To note, the same fraction does not induce significant change in heart rate. Has weak hemolytic activity. Is lethal to crayfish. Causes cutaneous inflammation in humans. May act as a pore-forming toxin, disrupting normal transmembrane ion concentration gradients in susceptible cells. The polypeptide is Toxin CfTX-2 (Chironex fleckeri (Australian box jellyfish)).